A 538-amino-acid chain; its full sequence is Cytochrome P450 monooxygenase verH (538 aa).

The helical transmembrane segment at 2–21 threads the bilayer; it reads VFAMLVVCWSIFLGLWMLVS. Cys-445 lines the heme pocket.

Belongs to the cytochrome P450 family. The cofactor is heme.

It is found in the membrane. Its pathway is secondary metabolite biosynthesis; terpenoid biosynthesis. It functions in the pathway mycotoxin biosynthesis. Functionally, cytochrome P450 monooxygenase; part of the gene cluster that mediates the biosynthesis of the neurotoxin verrucosidin, a methylated alpha-pyrone polyketide that inhibits oxidative phosphorylation in mitochondria and thereby causes neurological diseases. The carbon backbone of verrucosidin is synthesized by the HR-PKS verA, and further modified by the other verrucodidin cluster enzymes. The polypeptide is Cytochrome P450 monooxygenase verH (Penicillium polonicum).